The chain runs to 211 residues: Ubiquitin-conjugating enzyme E2 S (211 aa).

The UBC core domain maps to 11–157 (HVIRQVYKEV…ARLMTEIHAH (147 aa)). Cys95 serves as the catalytic Glycyl thioester intermediate. Positions 157 to 167 (HSSSLRGKDPT) are enriched in basic and acidic residues. The interval 157–211 (HSSSLRGKDPTDPCSSASVTGALGDGPMAKKHAGDRDKKLAAKKKTDKKRALRRL) is disordered. Residues 197–211 (AAKKKTDKKRALRRL) show a composition bias toward basic residues.

It belongs to the ubiquitin-conjugating enzyme family.

The catalysed reaction is S-ubiquitinyl-[E1 ubiquitin-activating enzyme]-L-cysteine + [E2 ubiquitin-conjugating enzyme]-L-cysteine = [E1 ubiquitin-activating enzyme]-L-cysteine + S-ubiquitinyl-[E2 ubiquitin-conjugating enzyme]-L-cysteine.. The protein operates within protein modification; protein ubiquitination. In terms of biological role, catalyzes the covalent attachment of ubiquitin to other proteins. Acts as an essential factor of the anaphase promoting complex/cyclosome (APC/C), a cell cycle-regulated ubiquitin ligase that controls progression through mitosis. Acts by specifically elongating 'Lys-11'-linked polyubiquitin chains initiated by the E2 enzyme ube2c/ubch10 on APC/C substrates, enhancing the degradation of APC/C substrates by the proteasome and promoting mitotic exit. This chain is Ubiquitin-conjugating enzyme E2 S (ube2s), found in Aquarana catesbeiana (American bullfrog).